Consider the following 143-residue polypeptide: Large ribosomal subunit protein uL11 (143 aa).

The protein belongs to the universal ribosomal protein uL11 family. Part of the ribosomal stalk of the 50S ribosomal subunit. Interacts with L10 and the large rRNA to form the base of the stalk. L10 forms an elongated spine to which L12 dimers bind in a sequential fashion forming a multimeric L10(L12)X complex. In terms of processing, one or more lysine residues are methylated.

In terms of biological role, forms part of the ribosomal stalk which helps the ribosome interact with GTP-bound translation factors. The protein is Large ribosomal subunit protein uL11 of Beutenbergia cavernae (strain ATCC BAA-8 / DSM 12333 / CCUG 43141 / JCM 11478 / NBRC 16432 / NCIMB 13614 / HKI 0122).